Consider the following 104-residue polypeptide: L-rhamnose mutarotase (104 aa).

Tyr-18 provides a ligand contact to substrate. His-22 acts as the Proton donor in catalysis. Residues Tyr-41 and 76–77 (WW) contribute to the substrate site.

The protein belongs to the rhamnose mutarotase family. In terms of assembly, homodimer.

The protein resides in the cytoplasm. It catalyses the reaction alpha-L-rhamnose = beta-L-rhamnose. Its pathway is carbohydrate metabolism; L-rhamnose metabolism. Functionally, involved in the anomeric conversion of L-rhamnose. The protein is L-rhamnose mutarotase of Rhizobium meliloti (strain 1021) (Ensifer meliloti).